The sequence spans 71 residues: Transcription modulator YdgT (71 aa).

This sequence belongs to the Hha/YmoA/Cnu family. In terms of assembly, forms complexes with both H-NS and StpA.

Binds to H-NS and modified the range of genes it silences; H-NS alonge silences core gene while the H-NS-Hha complex (and presumably also H-NS-YdgT) silences genes acquired by horizontal gene transfer. Plays a role silencing virulence factors in the absence of factors that induce pathogenicity. The complex formed with H-NS binds to the specific 26-bp cnb site in the origin of replication oriC. The chain is Transcription modulator YdgT (ydgT) from Salmonella choleraesuis (strain SC-B67).